The sequence spans 271 residues: Pyrroline-5-carboxylate reductase (271 aa).

This sequence belongs to the pyrroline-5-carboxylate reductase family.

The protein localises to the cytoplasm. The enzyme catalyses L-proline + NADP(+) = (S)-1-pyrroline-5-carboxylate + NADPH + 2 H(+). The catalysed reaction is L-proline + NAD(+) = (S)-1-pyrroline-5-carboxylate + NADH + 2 H(+). The protein operates within amino-acid biosynthesis; L-proline biosynthesis; L-proline from L-glutamate 5-semialdehyde: step 1/1. In terms of biological role, catalyzes the reduction of 1-pyrroline-5-carboxylate (PCA) to L-proline. The chain is Pyrroline-5-carboxylate reductase from Haemophilus influenzae (strain ATCC 51907 / DSM 11121 / KW20 / Rd).